The following is a 284-amino-acid chain: Halorhodopsin (284 aa).

The Extracellular portion of the chain corresponds to 1–30 (MIETAAADILAGGMVPLEMTQTQIFEAVQS). A helical transmembrane segment spans residues 31–56 (DTLLASSLWINIALAGLSILLFVYMG). The Cytoplasmic segment spans residues 57–62 (RNVEDP). The helical transmembrane segment at 63-86 (RAQLIFVATLMVPLVSISSYTGLV) threads the bilayer. Over 87–110 (SGLTVSFLEMPAGHALAGQEVLTP) the chain is Extracellular. A helical transmembrane segment spans residues 111-132 (WGRYLTWALSTPMILIAVGLLA). The Cytoplasmic segment spans residues 133–135 (GSN). A helical transmembrane segment spans residues 136–159 (TTKLFTAVVADIGMCVTGLAAALT). Residues 160–162 (TSS) are Extracellular-facing. The chain crosses the membrane as a helical span at residues 163–185 (YLLRWVWYAISCAFFVVVLYILL). The Cytoplasmic portion of the chain corresponds to 186-197 (AEWAEDAEIAGT). Residues 198–221 (ADIFNTLKVLTVVLWLGYPIFWAL) traverse the membrane as a helical segment. The Extracellular portion of the chain corresponds to 222–230 (GAEGLAVLD). A helical transmembrane segment spans residues 231–259 (VAITSWAYSGMDIVAKYLFAFLLLRWVVN). The residue at position 246 (Lys246) is an N6-(retinylidene)lysine. Residues 260-284 (NERTVADVASGLGSGSRGGAAPADD) are Cytoplasmic-facing.

The protein belongs to the archaeal/bacterial/fungal opsin family.

The protein resides in the cell membrane. Its function is as follows. Light-driven chloride pump. The chain is Halorhodopsin (hop) from Halobacterium sp. (strain SG1).